A 79-amino-acid polypeptide reads, in one-letter code: uncharacterized protein (79 aa).

This is an uncharacterized protein from Helicobacter pylori (strain ATCC 700392 / 26695) (Campylobacter pylori).